We begin with the raw amino-acid sequence, 207 residues long: Ribosomal RNA small subunit methyltransferase G (207 aa).

Residues G71, F76, A122–E123, and R135 contribute to the S-adenosyl-L-methionine site.

This sequence belongs to the methyltransferase superfamily. RNA methyltransferase RsmG family.

Its subcellular location is the cytoplasm. Specifically methylates the N7 position of a guanine in 16S rRNA. This Cytophaga hutchinsonii (strain ATCC 33406 / DSM 1761 / CIP 103989 / NBRC 15051 / NCIMB 9469 / D465) protein is Ribosomal RNA small subunit methyltransferase G.